Here is a 242-residue protein sequence, read N- to C-terminus: Biosynthetic peptidoglycan transglycosylase (242 aa).

Residues 19–39 (LMVVLAIFWGGGIALFSVAPV) traverse the membrane as a helical segment.

It belongs to the glycosyltransferase 51 family.

It localises to the cell inner membrane. The catalysed reaction is [GlcNAc-(1-&gt;4)-Mur2Ac(oyl-L-Ala-gamma-D-Glu-L-Lys-D-Ala-D-Ala)](n)-di-trans,octa-cis-undecaprenyl diphosphate + beta-D-GlcNAc-(1-&gt;4)-Mur2Ac(oyl-L-Ala-gamma-D-Glu-L-Lys-D-Ala-D-Ala)-di-trans,octa-cis-undecaprenyl diphosphate = [GlcNAc-(1-&gt;4)-Mur2Ac(oyl-L-Ala-gamma-D-Glu-L-Lys-D-Ala-D-Ala)](n+1)-di-trans,octa-cis-undecaprenyl diphosphate + di-trans,octa-cis-undecaprenyl diphosphate + H(+). It participates in cell wall biogenesis; peptidoglycan biosynthesis. Functionally, peptidoglycan polymerase that catalyzes glycan chain elongation from lipid-linked precursors. The chain is Biosynthetic peptidoglycan transglycosylase from Escherichia coli O45:K1 (strain S88 / ExPEC).